A 139-amino-acid chain; its full sequence is MEWIRKYHIAIAWMIATSAMLISLFFSEWMKLPPCDLCWYQRMAMYPLVLILGIGMYRKDPRVSMYAFPFTCIGLILSVYQITIQAFPINEMKICSVGVSCTEDYLNLFGFISIPMLSFIGFLVIIILIYIESDRETKE.

The helical transmembrane segment at 6-25 threads the bilayer; sequence KYHIAIAWMIATSAMLISLF. Cys-35 and Cys-38 are oxidised to a cystine. The next 2 membrane-spanning stretches (helical) occupy residues 40–59 and 66–83; these read YQRMAMYPLVLILGIGMYRK and YAFPFTCIGLILSVYQIT. A disulfide bridge connects residues Cys-95 and Cys-101. A helical transmembrane segment spans residues 110 to 133; the sequence is GFISIPMLSFIGFLVIIILIYIES.

This sequence belongs to the DsbB family. BdbC subfamily.

The protein resides in the cell membrane. Functionally, required for disulfide bond formation in some proteins. This chain is Probable disulfide formation protein C 2 (bdbC2), found in Bacillus cereus (strain ATCC 10987 / NRS 248).